Consider the following 266-residue polypeptide: Putative tyrosine phosphatase 197R (266 aa).

Positions 15 to 167 constitute a Tyrosine-protein phosphatase domain; the sequence is RPTLGSLSDK…LFGSQNINND (153 aa). Cysteine 111 serves as the catalytic Phosphocysteine intermediate.

The protein belongs to the protein-tyrosine phosphatase family.

It carries out the reaction O-phospho-L-tyrosyl-[protein] + H2O = L-tyrosyl-[protein] + phosphate. The polypeptide is Putative tyrosine phosphatase 197R (Invertebrate iridescent virus 6 (IIV-6)).